A 212-amino-acid polypeptide reads, in one-letter code: Large ribosomal subunit protein bL25 (212 aa).

The tract at residues Glu-179 to Asp-212 is disordered.

Belongs to the bacterial ribosomal protein bL25 family. CTC subfamily. In terms of assembly, part of the 50S ribosomal subunit; part of the 5S rRNA/L5/L18/L25 subcomplex. Contacts the 5S rRNA. Binds to the 5S rRNA independently of L5 and L18.

Functionally, this is one of the proteins that binds to the 5S RNA in the ribosome where it forms part of the central protuberance. The sequence is that of Large ribosomal subunit protein bL25 from Corynebacterium urealyticum (strain ATCC 43042 / DSM 7109).